Reading from the N-terminus, the 91-residue chain is UPF0213 protein NMC1807 (91 aa).

The GIY-YIG domain maps to 4–83 (SNWSVYLILC…AAQKRQLWEQ (80 aa)).

Belongs to the UPF0213 family.

This chain is UPF0213 protein NMC1807, found in Neisseria meningitidis serogroup C / serotype 2a (strain ATCC 700532 / DSM 15464 / FAM18).